The following is a 213-amino-acid chain: Protein RCR1 (213 aa).

The Lumenal portion of the chain corresponds to 1-39 (MGLISYENEAINEVKKADNHHVSKFVTSYYGPSSSSWQS). Residues 40–62 (GIWILFVLFVAAVILIILFTFVA) form a helical membrane-spanning segment. Residues 63-213 (NRRRRRMGRA…PERAKVNARS (151 aa)) lie on the Cytoplasmic side of the membrane. The PY motif signature appears at 104–107 (VPEY). The segment at 190–213 (ERLPGGTTTQEINPPERAKVNARS) is disordered. Residues 203-213 (PPERAKVNARS) show a composition bias toward basic and acidic residues.

As to quaternary structure, interacts with PMT4 and WW domain of RSP5.

The protein localises to the endoplasmic reticulum membrane. Its function is as follows. Regulates chitin deposition in the cell wall. This Saccharomyces cerevisiae (strain ATCC 204508 / S288c) (Baker's yeast) protein is Protein RCR1 (RCR1).